We begin with the raw amino-acid sequence, 196 residues long: MKNFIEAQIKSSIEAKEKILKDGQYIEQIQSIVEIVIQAYKLGKKVLLCGNGGSAADSQHIAAEFVSKFRLDRKALPAIALTVNTSVLTSIGNDYSYKNIFERQVEAFGKEGDVLIGISTSGNSENITLAFKKAKEIGITTIGFLGKDGGENKNYCDFPLIVPSEDTPRVQEAHIMIGHIVCDIVEKELFGEKVDE.

The SIS domain occupies 36-195 (VIQAYKLGKK…EKELFGEKVD (160 aa)). 51-53 (NGG) is a binding site for substrate. Positions 60 and 64 each coordinate Zn(2+). Substrate is bound by residues glutamate 64, 93 to 94 (ND), 119 to 121 (STS), serine 124, and glutamine 171. Zn(2+) contacts are provided by glutamine 171 and histidine 179.

The protein belongs to the SIS family. GmhA subfamily. Zn(2+) serves as cofactor.

Its subcellular location is the cytoplasm. The enzyme catalyses 2 D-sedoheptulose 7-phosphate = D-glycero-alpha-D-manno-heptose 7-phosphate + D-glycero-beta-D-manno-heptose 7-phosphate. It participates in carbohydrate biosynthesis; D-glycero-D-manno-heptose 7-phosphate biosynthesis; D-glycero-alpha-D-manno-heptose 7-phosphate and D-glycero-beta-D-manno-heptose 7-phosphate from sedoheptulose 7-phosphate: step 1/1. Catalyzes the isomerization of sedoheptulose 7-phosphate in D-glycero-D-manno-heptose 7-phosphate. This Clostridium acetobutylicum (strain ATCC 824 / DSM 792 / JCM 1419 / IAM 19013 / LMG 5710 / NBRC 13948 / NRRL B-527 / VKM B-1787 / 2291 / W) protein is Phosphoheptose isomerase.